The following is a 322-amino-acid chain: Interferon regulatory factor 1 (322 aa).

A DNA-binding region (IRF tryptophan pentad repeat) is located at residues 5-113; it reads RMRMRPWLEM…SAVRVYRMLP (109 aa). K78 carries the post-translational modification N6-acetyllysine. The segment at 92–164 is disordered; it reads EEVKDQSRNK…STLPDDHSNY (73 aa). Over residues 146–157 the composition is skewed to polar residues; sequence DTFSDGLSSSTL. Residues K276 and K296 each participate in a glycyl lysine isopeptide (Lys-Gly) (interchain with G-Cter in SUMO) cross-link.

It belongs to the IRF family. In terms of assembly, monomer. Homodimer. Interacts with EP300. Interacts with MYD88. Interacts with PIAS3. Interacts with SPOP. Phosphorylated by CK2 and this positively regulates its activity. In terms of processing, sumoylation represses the transcriptional activity and displays enhanced resistance to protein degradation. Sumoylated by UBE2I/UBC9 and SUMO1. Inactivates the tumor suppressor activity. Elevated levels in tumor cells. Major site is Lys-276. Sumoylation is enhanced by PIAS3. Desumoylated by SENP1 in tumor cells and appears to compete with ubiquitination on C-terminal sites. Post-translationally, ubiquitinated in a SPOP-depedent manner. Appears to compete with sumoylation on C-terminal sites.

The protein localises to the nucleus. Its subcellular location is the cytoplasm. Its activity is regulated as follows. Activated by MYD88. Transcriptional regulator which displays a remarkable functional diversity in the regulation of cellular responses. Regulates transcription of IFN and IFN-inducible genes, host response to viral and bacterial infections, regulation of many genes expressed during hematopoiesis, inflammation, immune responses and cell proliferation and differentiation, regulation of the cell cycle and induction of growth arrest and programmed cell death following DNA damage. Stimulates both innate and acquired immune responses through the activation of specific target genes and can act as a transcriptional activator and repressor regulating target genes by binding to an interferon-stimulated response element (ISRE) in their promoters. Has an essentail role in IFNG-dependent immunity to mycobacteria. Binds to a consensus sequence in gene promoters. Its target genes for transcriptional activation activity include: genes involved in anti-viral response, such as IFN-alpha/beta, RIGI, TNFSF10/TRAIL, ZBP1, OAS1/2, PIAS1/GBP, EIF2AK2/PKR and RSAD2/viperin; antibacterial response, such as GBP2, GBP5 and NOS2/INOS; anti-proliferative response, such as p53/TP53, LOX and CDKN1A; apoptosis, such as BBC3/PUMA, CASP1, CASP7 and CASP8; immune response, such as IL7, IL12A/B and IL15, PTGS2/COX2 and CYBB; DNA damage responses and DNA repair, such as POLQ/POLH; MHC class I expression, such as TAP1, PSMB9/LMP2, PSME1/PA28A, PSME2/PA28B and B2M and MHC class II expression, such as CIITA; metabolic enzymes, such as ACOD1/IRG1. Represses genes involved in anti-proliferative response, such as BIRC5/survivin, CCNB1, CCNE1, CDK1, CDK2 and CDK4 and in immune response, such as FOXP3, IL4, ANXA2 and TLR4. Stimulates p53/TP53-dependent transcription through enhanced recruitment of EP300 leading to increased acetylation of p53/TP53. Plays an important role in immune response directly affecting NK maturation and activity, macrophage production of IL12, Th1 development and maturation of CD8+ T-cells. Also implicated in the differentiation and maturation of dendritic cells and in the suppression of regulatory T (Treg) cells development. Acts as a tumor suppressor and plays a role not only in antagonism of tumor cell growth but also in stimulating an immune response against tumor cells. This is Interferon regulatory factor 1 (IRF1) from Bos taurus (Bovine).